Here is a 177-residue protein sequence, read N- to C-terminus: Ribosome maturation factor RimM (177 aa).

The PRC barrel domain maps to E92–P166.

The protein belongs to the RimM family. Binds ribosomal protein uS19.

Its subcellular location is the cytoplasm. In terms of biological role, an accessory protein needed during the final step in the assembly of 30S ribosomal subunit, possibly for assembly of the head region. Essential for efficient processing of 16S rRNA. May be needed both before and after RbfA during the maturation of 16S rRNA. It has affinity for free ribosomal 30S subunits but not for 70S ribosomes. The sequence is that of Ribosome maturation factor RimM from Azorhizobium caulinodans (strain ATCC 43989 / DSM 5975 / JCM 20966 / LMG 6465 / NBRC 14845 / NCIMB 13405 / ORS 571).